Consider the following 228-residue polypeptide: Urease accessory protein UreF (228 aa).

This sequence belongs to the UreF family. UreD, UreF and UreG form a complex that acts as a GTP-hydrolysis-dependent molecular chaperone, activating the urease apoprotein by helping to assemble the nickel containing metallocenter of UreC. The UreE protein probably delivers the nickel.

It is found in the cytoplasm. Its function is as follows. Required for maturation of urease via the functional incorporation of the urease nickel metallocenter. The chain is Urease accessory protein UreF from Prochlorococcus marinus (strain AS9601).